A 441-amino-acid chain; its full sequence is ATP-dependent RNA helicase SUB2 (441 aa).

The span at M1 to E17 shows a compositional bias: acidic residues. The disordered stretch occupies residues M1–Q47. Residues P21–N30 show a composition bias toward polar residues. Basic and acidic residues predominate over residues A33–E46. Residues T57–Q85 carry the Q motif motif. Positions I88–I263 constitute a Helicase ATP-binding domain. A101–T108 contributes to the ATP binding site. Residues D210–D213 carry the DECD box motif. One can recognise a Helicase C-terminal domain in the interval G275–S436.

This sequence belongs to the DEAD box helicase family. DECD subfamily.

The protein localises to the nucleus. The catalysed reaction is ATP + H2O = ADP + phosphate + H(+). ATP-binding RNA helicase involved in transcription elongation and required for the export of mRNA out of the nucleus. SUB2 also plays a role in pre-mRNA splicing and spliceosome assembly. May be involved in rDNA and telomeric silencing, and maintenance of genome integrity. The protein is ATP-dependent RNA helicase SUB2 (SUB2) of Yarrowia lipolytica (strain CLIB 122 / E 150) (Yeast).